A 595-amino-acid chain; its full sequence is Quinoprotein alcohol dehydrogenase PedH (595 aa).

The signal sequence occupies residues 1–27 (MTRSPRRPLFAVSLVLSAMLLAGAAHA). Glutamine 87 lines the pyrroloquinoline quinone pocket. Cysteines 131 and 132 form a disulfide. Residues arginine 137, serine 181, glycine 197, and glycine 198 each contribute to the pyrroloquinoline quinone site. Residue glutamate 199 participates in Pr(3+) binding. Tryptophan 263 contributes to the pyrroloquinoline quinone binding site. Pr(3+) is bound by residues asparagine 281, aspartate 323, and aspartate 325. Aspartate 323 serves as the catalytic Proton acceptor. The pyrroloquinoline quinone site is built by arginine 350, asparagine 417, tryptophan 493, and alanine 557.

It belongs to the bacterial PQQ dehydrogenase family. Pr(3+) is required as a cofactor. The cofactor is Nd(3+). La(3+) serves as cofactor. Requires Ce(3+) as cofactor. It depends on Sm(3+) as a cofactor. Pyrroloquinoline quinone is required as a cofactor. In terms of processing, the disulfide ring formed between the two adjacent cysteine residues Cys-131 and Cys-132 is essential for efficient electron transfer at pH 7 from PedH to its natural electron acceptor cytochrome c550.

The protein localises to the periplasm. The catalysed reaction is a primary alcohol + 2 Fe(III)-[cytochrome c] = an aldehyde + 2 Fe(II)-[cytochrome c] + 2 H(+). It catalyses the reaction ethanol + 2 Fe(III)-[cytochrome c] = acetaldehyde + 2 Fe(II)-[cytochrome c] + 2 H(+). It carries out the reaction butan-1-ol + 2 Fe(III)-[cytochrome c] = butanal + 2 Fe(II)-[cytochrome c] + 2 H(+). The enzyme catalyses butan-2-ol + 2 Fe(III)-[cytochrome c] = butan-2-one + 2 Fe(II)-[cytochrome c] + 2 H(+). The catalysed reaction is 2-phenylethanol + 2 Fe(III)-[cytochrome c] = 2-phenylacetaldehyde + 2 Fe(II)-[cytochrome c] + 2 H(+). It catalyses the reaction octan-1-ol + 2 Fe(III)-[cytochrome c] = octanal + 2 Fe(II)-[cytochrome c] + 2 H(+). It carries out the reaction hexan-1-ol + 2 Fe(III)-[cytochrome c] = hexanal + 2 Fe(II)-[cytochrome c] + 2 H(+). The enzyme catalyses cinnamyl alcohol + 2 Fe(III)-[cytochrome c] = cinnamaldehyde + 2 Fe(II)-[cytochrome c] + 2 H(+). The catalysed reaction is farnesol + 2 Fe(III)-[cytochrome c] = farnesal + 2 Fe(II)-[cytochrome c] + 2 H(+). It catalyses the reaction an aldehyde + 2 Fe(III)-[cytochrome c] + H2O = a carboxylate + 2 Fe(II)-[cytochrome c] + 3 H(+). It carries out the reaction acetaldehyde + 2 Fe(III)-[cytochrome c] + H2O = 2 Fe(II)-[cytochrome c] + acetate + 3 H(+). The enzyme catalyses butanal + 2 Fe(III)-[cytochrome c] + H2O = butanoate + 2 Fe(II)-[cytochrome c] + 3 H(+). The catalysed reaction is hexanal + 2 Fe(III)-[cytochrome c] + H2O = hexanoate + 2 Fe(II)-[cytochrome c] + 3 H(+). It catalyses the reaction octanal + 2 Fe(III)-[cytochrome c] + H2O = octanoate + 2 Fe(II)-[cytochrome c] + 3 H(+). In terms of biological role, alcohol dehydrogenase that catalyzes the oxidation of a range of substrates, including linear and aromatic primary and secondary alcohols, as well as aldehydes, but only in the presence of lanthanides, allowing bacterial growth with a variety of volatile organic compounds (VOCs) as carbon and energy sources. Is also involved in the transcriptional regulation of pedE and pedH, most likely acting as a lanthanide sensory module. Uses a specific inducible cytochrome c550, encoded by the adjacent gene in the locus, as electron acceptor. The chain is Quinoprotein alcohol dehydrogenase PedH from Pseudomonas putida (strain ATCC 47054 / DSM 6125 / CFBP 8728 / NCIMB 11950 / KT2440).